The following is a 243-amino-acid chain: Small ribosomal subunit protein uS3 (243 aa).

A KH type-2 domain is found at 39 to 110; that stretch reads IRTFIQKKYG…QVRINVVEVE (72 aa). The segment at 216 to 243 is disordered; that stretch reads KTIPVGASPKRKAGRRPQQFEDRSNENS. Over residues 233-243 the composition is skewed to basic and acidic residues; it reads QQFEDRSNENS.

The protein belongs to the universal ribosomal protein uS3 family. In terms of assembly, part of the 30S ribosomal subunit. Forms a tight complex with proteins S10 and S14.

Its function is as follows. Binds the lower part of the 30S subunit head. Binds mRNA in the 70S ribosome, positioning it for translation. The sequence is that of Small ribosomal subunit protein uS3 from Prochlorococcus marinus (strain MIT 9312).